The sequence spans 484 residues: Cobyric acid synthase (484 aa).

Residues alanine 251–tyrosine 438 form the GATase cobBQ-type domain. The Nucleophile role is filled by cysteine 333. Histidine 430 is a catalytic residue.

Belongs to the CobB/CobQ family. CobQ subfamily.

Its pathway is cofactor biosynthesis; adenosylcobalamin biosynthesis. Its function is as follows. Catalyzes amidations at positions B, D, E, and G on adenosylcobyrinic A,C-diamide. NH(2) groups are provided by glutamine, and one molecule of ATP is hydrogenolyzed for each amidation. This chain is Cobyric acid synthase, found in Sinorhizobium fredii (strain NBRC 101917 / NGR234).